A 285-amino-acid chain; its full sequence is Undecaprenyl-diphosphatase (285 aa).

Transmembrane regions (helical) follow at residues 40–60 (DELL…LLYF), 92–112 (LCIL…ENFI), 122–142 (SVYA…WADA), 159–179 (FLIG…RSGI), 197–217 (FSML…LLGL), 233–253 (LIVA…LMAL), and 259–279 (FLPF…TSPI).

This sequence belongs to the UppP family.

It localises to the cell inner membrane. The catalysed reaction is di-trans,octa-cis-undecaprenyl diphosphate + H2O = di-trans,octa-cis-undecaprenyl phosphate + phosphate + H(+). Its function is as follows. Catalyzes the dephosphorylation of undecaprenyl diphosphate (UPP). Confers resistance to bacitracin. This Hyphomonas neptunium (strain ATCC 15444) protein is Undecaprenyl-diphosphatase.